A 341-amino-acid chain; its full sequence is S-adenosylmethionine:tRNA ribosyltransferase-isomerase (341 aa).

This sequence belongs to the QueA family. Monomer.

The protein resides in the cytoplasm. It catalyses the reaction 7-aminomethyl-7-carbaguanosine(34) in tRNA + S-adenosyl-L-methionine = epoxyqueuosine(34) in tRNA + adenine + L-methionine + 2 H(+). The protein operates within tRNA modification; tRNA-queuosine biosynthesis. Functionally, transfers and isomerizes the ribose moiety from AdoMet to the 7-aminomethyl group of 7-deazaguanine (preQ1-tRNA) to give epoxyqueuosine (oQ-tRNA). The protein is S-adenosylmethionine:tRNA ribosyltransferase-isomerase of Desulforamulus reducens (strain ATCC BAA-1160 / DSM 100696 / MI-1) (Desulfotomaculum reducens).